Here is a 182-residue protein sequence, read N- to C-terminus: Gamma-crystallin N (182 aa).

3 consecutive Beta/gamma crystallin 'Greek key' domains span residues 6-46, 47-89, and 95-136; these read GKIT…HVES, GAWV…RPVG, and FRLE…KVYG. The tract at residues 153-182 is disordered; it reads LSSSLQSDQGPEEATTKPATTQPPFLTANL. Polar residues predominate over residues 169–182; it reads KPATTQPPFLTANL.

Belongs to the beta/gamma-crystallin family. In terms of assembly, monomer. In terms of tissue distribution, not specifically expressed in eye.

This is Gamma-crystallin N from Homo sapiens (Human).